A 261-amino-acid polypeptide reads, in one-letter code: Oligodendrocyte transcription factor 1 (261 aa).

The disordered stretch occupies residues 41 to 105 (PPISSSSSTS…LRRKINSRER (65 aa)). The span at 44-56 (SSSSSTSSSSTAS) shows a compositional bias: low complexity. Positions 95–154 (QLRRKINSRERKRMQDLNLAMDALREVILPYSAAHCQGAPGRKLSKIATLLLARNYILLL) constitute a bHLH domain.

In terms of tissue distribution, expressed specifically in the brain, including the corpus callosum, hippocampal and cerebral white matter. Also detected in cells scattered in gray matter, most probably in oligodendrocytes.

It localises to the nucleus. Promotes formation and maturation of oligodendrocytes, especially within the brain. Cooperates with OLIG2 to establish the pMN domain of the embryonic neural tube. In Rattus norvegicus (Rat), this protein is Oligodendrocyte transcription factor 1 (Olig1).